We begin with the raw amino-acid sequence, 131 residues long: Small ribosomal subunit protein uS11 (131 aa).

This sequence belongs to the universal ribosomal protein uS11 family. In terms of assembly, part of the 30S ribosomal subunit. Interacts with proteins S7 and S18. Binds to IF-3.

Functionally, located on the platform of the 30S subunit, it bridges several disparate RNA helices of the 16S rRNA. Forms part of the Shine-Dalgarno cleft in the 70S ribosome. The sequence is that of Small ribosomal subunit protein uS11 from Bacillus pumilus (strain SAFR-032).